The primary structure comprises 553 residues: Putative transport protein ASA_0825 (553 aa).

5 consecutive transmembrane segments (helical) span residues 4-24, 29-49, 65-85, 95-115, and 158-178; these read IALS…LGNW, VGLG…FAGV, FGLI…FFSS, GFAA…HQLF, and MGYA…MWLV. RCK C-terminal domains lie at 191–276 and 279–361; these read DLFE…VLGE and ETSL…VVGN. The next 6 membrane-spanning stretches (helical) occupy residues 371-391, 403-425, 439-459, 465-485, 493-513, and 533-553; these read MLPV…PFYL, AGGP…LYWF, IVLF…DTLI, AWMM…GVLA, YLTL…LAFA, and LVMF…WAGV.

The protein belongs to the AAE transporter (TC 2.A.81) family. YidE subfamily.

The protein localises to the cell membrane. In Aeromonas salmonicida (strain A449), this protein is Putative transport protein ASA_0825.